The following is a 184-amino-acid chain: Protein Iojap-related, mitochondrial (184 aa).

The N-terminal 39 residues, 1 to 39, are a transit peptide targeting the mitochondrion; it reads MLTTLRSRCSSLLLNQSWKLAPNRIFASSPSFSSSAGIS.

The protein belongs to the Iojap/RsfS family.

It is found in the mitochondrion. Functionally, may be a ribosome silencing factor involved in organelle biogenesis and required for germination. The chain is Protein Iojap-related, mitochondrial from Arabidopsis thaliana (Mouse-ear cress).